Reading from the N-terminus, the 490-residue chain is Cytochrome P450 71A25 (490 aa).

The chain crosses the membrane as a helical span at residues 1 to 21; the sequence is MMMMIILLWSIIFMTILFLKK. Position 431 (Cys431) interacts with heme.

This sequence belongs to the cytochrome P450 family. Heme is required as a cofactor.

The protein localises to the membrane. The sequence is that of Cytochrome P450 71A25 (CYP71A25) from Arabidopsis thaliana (Mouse-ear cress).